The sequence spans 425 residues: Glutamyl-tRNA reductase (425 aa).

Substrate-binding positions include Thr49 to Arg52, Ser107, Glu112 to Gln114, and Gln118. Cys50 acts as the Nucleophile in catalysis. Gly187–Ile192 is a binding site for NADP(+).

This sequence belongs to the glutamyl-tRNA reductase family. In terms of assembly, homodimer.

It catalyses the reaction (S)-4-amino-5-oxopentanoate + tRNA(Glu) + NADP(+) = L-glutamyl-tRNA(Glu) + NADPH + H(+). Its pathway is porphyrin-containing compound metabolism; protoporphyrin-IX biosynthesis; 5-aminolevulinate from L-glutamyl-tRNA(Glu): step 1/2. In terms of biological role, catalyzes the NADPH-dependent reduction of glutamyl-tRNA(Glu) to glutamate 1-semialdehyde (GSA). This Pseudomonas syringae pv. syringae (strain B728a) protein is Glutamyl-tRNA reductase.